A 464-amino-acid polypeptide reads, in one-letter code: MLATDSDPIVAIATAAGRGGIGVVRVSFGRGGEAAALPLIDALCGQKLAPRHASYVPFLDAHGAPLDRGIALYFPAPHSYTGEHVLELQGHGGPIVMQLLLQRCLDAGRGFGLRLAEPGEFTRRAFLNDKLDLAQAEAVADLIEASTEAAARSAGRSLDGAFSRQIHALVDDVITLRMLVEATLDFPEEEIDFLEAADARGKLAKIRAQLAHVLGDARQGALLREGLSVVLAGQPNVGKSSLLNALAGAELAIVTPIAGTTRDKVAQTIQVEGIPLHIIDTAGLRETEDEVERIGIARTWSEIERADVVLHLLDSRTGMTPDDETIAARFPAGVPVVRVLNKTDLTGVPACVEHPAAEGDLTEVHLSAKRGDGIDMLRAELLRIAGWQAGAEGVYLARERHLIALRAAQEHLAQAADHAEQRAQSLDLFAEELRLAQEQLNAITGEFTSDDLLGVIFSRFCIGK.

The (6S)-5-formyl-5,6,7,8-tetrahydrofolate site is built by arginine 25, glutamate 87, and lysine 130. One can recognise a TrmE-type G domain in the interval 226–386; the sequence is GLSVVLAGQP…LRAELLRIAG (161 aa). Residue asparagine 236 participates in K(+) binding. GTP-binding positions include 236-241, 255-261, and 280-283; these read NVGKSS, TPIAGTT, and DTAG. Residue serine 240 participates in Mg(2+) binding. Threonine 255, isoleucine 257, and threonine 260 together coordinate K(+). Position 261 (threonine 261) interacts with Mg(2+). (6S)-5-formyl-5,6,7,8-tetrahydrofolate is bound at residue lysine 464.

It belongs to the TRAFAC class TrmE-Era-EngA-EngB-Septin-like GTPase superfamily. TrmE GTPase family. In terms of assembly, homodimer. Heterotetramer of two MnmE and two MnmG subunits. The cofactor is K(+).

The protein resides in the cytoplasm. Functionally, exhibits a very high intrinsic GTPase hydrolysis rate. Involved in the addition of a carboxymethylaminomethyl (cmnm) group at the wobble position (U34) of certain tRNAs, forming tRNA-cmnm(5)s(2)U34. The protein is tRNA modification GTPase MnmE of Burkholderia orbicola (strain MC0-3).